Reading from the N-terminus, the 90-residue chain is Small ribosomal subunit protein uS15 (90 aa).

The protein belongs to the universal ribosomal protein uS15 family. Part of the 30S ribosomal subunit. Forms a bridge to the 50S subunit in the 70S ribosome, contacting the 23S rRNA.

Functionally, one of the primary rRNA binding proteins, it binds directly to 16S rRNA where it helps nucleate assembly of the platform of the 30S subunit by binding and bridging several RNA helices of the 16S rRNA. Forms an intersubunit bridge (bridge B4) with the 23S rRNA of the 50S subunit in the ribosome. This Helicobacter pylori (strain HPAG1) protein is Small ribosomal subunit protein uS15.